Here is a 414-residue protein sequence, read N- to C-terminus: Serine hydroxymethyltransferase (414 aa).

Residues L121 and G125–L127 each bind (6S)-5,6,7,8-tetrahydrofolate. K229 is modified (N6-(pyridoxal phosphate)lysine).

The protein belongs to the SHMT family. As to quaternary structure, homodimer. It depends on pyridoxal 5'-phosphate as a cofactor.

Its subcellular location is the cytoplasm. The enzyme catalyses (6R)-5,10-methylene-5,6,7,8-tetrahydrofolate + glycine + H2O = (6S)-5,6,7,8-tetrahydrofolate + L-serine. The protein operates within one-carbon metabolism; tetrahydrofolate interconversion. It functions in the pathway amino-acid biosynthesis; glycine biosynthesis; glycine from L-serine: step 1/1. Functionally, catalyzes the reversible interconversion of serine and glycine with tetrahydrofolate (THF) serving as the one-carbon carrier. This reaction serves as the major source of one-carbon groups required for the biosynthesis of purines, thymidylate, methionine, and other important biomolecules. Also exhibits THF-independent aldolase activity toward beta-hydroxyamino acids, producing glycine and aldehydes, via a retro-aldol mechanism. The sequence is that of Serine hydroxymethyltransferase from Herminiimonas arsenicoxydans.